Reading from the N-terminus, the 606-residue chain is Sulfite reductase [NADPH] flavoprotein alpha-component (606 aa).

The Flavodoxin-like domain occupies 64–202 (VTLISASQTG…QAQQWRQQVV (139 aa)). FMN contacts are provided by residues 70–75 (SQTGNA), 117–120 (STQG), and 153–162 (LGDTSYEHFC). Over residues 212–234 (QSTAPTQSTTPAAAAITSGGTTT) the composition is skewed to low complexity. The segment at 212-235 (QSTAPTQSTTPAAAAITSGGTTTV) is disordered. Positions 241–455 (TAPLTAQLSV…IEHNDNFRLP (215 aa)) constitute an FAD-binding FR-type domain. FAD is bound by residues T329, K363, 393-396 (RLYS), 411-413 (TVG), Y417, and 426-429 (GGAS). NADP(+) contacts are provided by residues 526 to 527 (SR), 532 to 536 (KIYVQ), and D568. Position 606 (Y606) interacts with FAD.

It belongs to the NADPH-dependent sulphite reductase flavoprotein subunit CysJ family. In the N-terminal section; belongs to the flavodoxin family. This sequence in the C-terminal section; belongs to the flavoprotein pyridine nucleotide cytochrome reductase family. Alpha(8)-beta(8). The alpha component is a flavoprotein, the beta component is a hemoprotein. It depends on FAD as a cofactor. Requires FMN as cofactor.

The enzyme catalyses hydrogen sulfide + 3 NADP(+) + 3 H2O = sulfite + 3 NADPH + 4 H(+). Its pathway is sulfur metabolism; hydrogen sulfide biosynthesis; hydrogen sulfide from sulfite (NADPH route): step 1/1. Component of the sulfite reductase complex that catalyzes the 6-electron reduction of sulfite to sulfide. This is one of several activities required for the biosynthesis of L-cysteine from sulfate. The flavoprotein component catalyzes the electron flow from NADPH -&gt; FAD -&gt; FMN to the hemoprotein component. In Yersinia pestis bv. Antiqua (strain Antiqua), this protein is Sulfite reductase [NADPH] flavoprotein alpha-component.